Here is a 312-residue protein sequence, read N- to C-terminus: Zinc import ATP-binding protein ZnuC (312 aa).

Residues 13–228 (VSLEDVGVLR…PEYVRLFGSR (216 aa)) form the ABC transporter domain. 45-52 (GPNGSGKS) lines the ATP pocket. The tract at residues 241–312 (DHTHLPDGRV…HSRSGEGRHA (72 aa)) is disordered. Over residues 243 to 312 (THLPDGRVLH…HSRSGEGRHA (70 aa)) the composition is skewed to basic and acidic residues.

The protein belongs to the ABC transporter superfamily. Zinc importer (TC 3.A.1.15.5) family. As to quaternary structure, the complex is composed of two ATP-binding proteins (ZnuC), two transmembrane proteins (ZnuB) and a solute-binding protein (ZnuA).

It localises to the cell inner membrane. The enzyme catalyses Zn(2+)(out) + ATP(in) + H2O(in) = Zn(2+)(in) + ADP(in) + phosphate(in) + H(+)(in). Part of the ABC transporter complex ZnuABC involved in zinc import. Responsible for energy coupling to the transport system. This is Zinc import ATP-binding protein ZnuC from Rhizobium etli (strain ATCC 51251 / DSM 11541 / JCM 21823 / NBRC 15573 / CFN 42).